A 310-amino-acid chain; its full sequence is Cytochrome f (310 aa).

Residues M1–A26 form the signal peptide. F27, C47, C50, and H51 together coordinate heme. The chain crosses the membrane as a helical span at residues I276 to K296.

It belongs to the cytochrome f family. As to quaternary structure, the 4 large subunits of the cytochrome b6-f complex are cytochrome b6, subunit IV (17 kDa polypeptide, petD), cytochrome f and the Rieske protein, while the 4 small subunits are PetG, PetL, PetM and PetN. The complex functions as a dimer. Requires heme as cofactor.

It localises to the plastid. Its subcellular location is the chloroplast thylakoid membrane. Functionally, component of the cytochrome b6-f complex, which mediates electron transfer between photosystem II (PSII) and photosystem I (PSI), cyclic electron flow around PSI, and state transitions. The polypeptide is Cytochrome f (Gracilaria tenuistipitata var. liui (Red alga)).